A 131-amino-acid chain; its full sequence is Glycine cleavage system H protein (131 aa).

The 83-residue stretch at 24-106 folds into the Lipoyl-binding domain; sequence RVTVGISDHA…YGEGWIFVVE (83 aa). The residue at position 65 (Lys-65) is an N6-lipoyllysine.

Belongs to the GcvH family. The glycine cleavage system is composed of four proteins: P, T, L and H. (R)-lipoate serves as cofactor.

Functionally, the glycine cleavage system catalyzes the degradation of glycine. The H protein shuttles the methylamine group of glycine from the P protein to the T protein. The sequence is that of Glycine cleavage system H protein from Xanthomonas oryzae pv. oryzae (strain MAFF 311018).